The sequence spans 339 residues: Annexin A2 (339 aa).

S2 carries the post-translational modification N-acetylserine. Residues 2–24 (STVHEILSKLSLEGDHSLPPSAY) form an S100A10-binding site region. Phosphotyrosine; by SRC is present on Y24. The residue at position 26 (T26) is a Phosphothreonine; by PKC. 4 Annexin repeats span residues 33-104 (FDAD…GLLK), 105-176 (TPSQ…ALAK), 189-261 (ELID…NLVQ), and 265-336 (NKQL…NLCG).

It belongs to the annexin family. Heterotetramer containing 2 light chains of S100A10/p11 and 2 heavy chains of ANXA2/p36.

The protein resides in the secreted. The protein localises to the extracellular space. It localises to the extracellular matrix. Its subcellular location is the basement membrane. In terms of biological role, calcium-regulated membrane-binding protein whose affinity for calcium is greatly enhanced by anionic phospholipids. It binds two calcium ions with high affinity. In Gallus gallus (Chicken), this protein is Annexin A2 (ANXA2).